A 311-amino-acid polypeptide reads, in one-letter code: Ribosomal RNA small subunit methyltransferase H (311 aa).

Residues 32-34, D52, F79, D100, and Q107 contribute to the S-adenosyl-L-methionine site; that span reads AGH. The tract at residues 287–311 is disordered; it reads TASQEELEENNRARSAKLRIAEKRK. Over residues 300 to 311 the composition is skewed to basic residues; that stretch reads RSAKLRIAEKRK.

This sequence belongs to the methyltransferase superfamily. RsmH family.

The protein localises to the cytoplasm. It catalyses the reaction cytidine(1402) in 16S rRNA + S-adenosyl-L-methionine = N(4)-methylcytidine(1402) in 16S rRNA + S-adenosyl-L-homocysteine + H(+). Specifically methylates the N4 position of cytidine in position 1402 (C1402) of 16S rRNA. The chain is Ribosomal RNA small subunit methyltransferase H from Bacillus subtilis (strain 168).